The following is a 218-amino-acid chain: Capsid protein (218 aa).

At methionine 1 the chain carries N-acetylmethionine; by host. A disordered region spans residues 1–30 (MDKSGSPNASRTSRRRRPRRGSRSASGADA). Positions 12 to 22 (TSRRRRPRRGS) are enriched in basic residues.

It belongs to the cucumovirus capsid protein family.

The protein resides in the virion. Functionally, capsid protein. Probably binds RNA and plays a role in packaging. The polypeptide is Capsid protein (Cucumber mosaic virus (strain Q) (CMV)).